Here is a 351-residue protein sequence, read N- to C-terminus: Uroporphyrinogen decarboxylase (351 aa).

Substrate is bound by residues 25–29 (RQAGR), D74, Y151, S206, and H325.

This sequence belongs to the uroporphyrinogen decarboxylase family. As to quaternary structure, homodimer.

The protein resides in the cytoplasm. It carries out the reaction uroporphyrinogen III + 4 H(+) = coproporphyrinogen III + 4 CO2. It functions in the pathway porphyrin-containing compound metabolism; protoporphyrin-IX biosynthesis; coproporphyrinogen-III from 5-aminolevulinate: step 4/4. Its function is as follows. Catalyzes the decarboxylation of four acetate groups of uroporphyrinogen-III to yield coproporphyrinogen-III. This Chlorobium chlorochromatii (strain CaD3) protein is Uroporphyrinogen decarboxylase.